The sequence spans 284 residues: Pantothenate synthetase (284 aa).

30–37 (MGNLHEGH) lines the ATP pocket. The active-site Proton donor is His37. A (R)-pantoate-binding site is contributed by Gln61. Gln61 is a binding site for beta-alanine. Residue 149 to 152 (GEKD) participates in ATP binding. Gln155 contacts (R)-pantoate. Residues Val178 and 186 to 189 (LSSR) contribute to the ATP site.

This sequence belongs to the pantothenate synthetase family. Homodimer.

The protein resides in the cytoplasm. It catalyses the reaction (R)-pantoate + beta-alanine + ATP = (R)-pantothenate + AMP + diphosphate + H(+). Its pathway is cofactor biosynthesis; (R)-pantothenate biosynthesis; (R)-pantothenate from (R)-pantoate and beta-alanine: step 1/1. Catalyzes the condensation of pantoate with beta-alanine in an ATP-dependent reaction via a pantoyl-adenylate intermediate. This Yersinia pseudotuberculosis serotype O:1b (strain IP 31758) protein is Pantothenate synthetase.